The following is a 203-amino-acid chain: Leucyl/phenylalanyl-tRNA--protein transferase (203 aa).

It belongs to the L/F-transferase family.

The protein localises to the cytoplasm. It catalyses the reaction N-terminal L-lysyl-[protein] + L-leucyl-tRNA(Leu) = N-terminal L-leucyl-L-lysyl-[protein] + tRNA(Leu) + H(+). The catalysed reaction is N-terminal L-arginyl-[protein] + L-leucyl-tRNA(Leu) = N-terminal L-leucyl-L-arginyl-[protein] + tRNA(Leu) + H(+). It carries out the reaction L-phenylalanyl-tRNA(Phe) + an N-terminal L-alpha-aminoacyl-[protein] = an N-terminal L-phenylalanyl-L-alpha-aminoacyl-[protein] + tRNA(Phe). In terms of biological role, functions in the N-end rule pathway of protein degradation where it conjugates Leu, Phe and, less efficiently, Met from aminoacyl-tRNAs to the N-termini of proteins containing an N-terminal arginine or lysine. This chain is Leucyl/phenylalanyl-tRNA--protein transferase, found in Chelativorans sp. (strain BNC1).